Reading from the N-terminus, the 167-residue chain is Urease accessory protein UreE (167 aa).

It belongs to the UreE family.

The protein localises to the cytoplasm. Its function is as follows. Involved in urease metallocenter assembly. Binds nickel. Probably functions as a nickel donor during metallocenter assembly. This Pseudomonas aeruginosa (strain UCBPP-PA14) protein is Urease accessory protein UreE.